The sequence spans 251 residues: E3 ubiquitin-protein ligase MARCHF3 (251 aa).

Residues 61–121 (QSFNDRPMCR…ELCHFRFSVE (61 aa)) form an RING-CH-type zinc finger. The Zn(2+) site is built by Cys69, Cys72, Cys85, Cys87, His95, Cys98, Cys111, and Cys114. 2 consecutive transmembrane segments (helical) span residues 143 to 163 (LFGDMVCFLFITPLATISGWL) and 180 to 200 (AVGLIALTVALFTIYLFWTLV).

It is found in the cytoplasmic vesicle membrane. It localises to the early endosome membrane. The enzyme catalyses S-ubiquitinyl-[E2 ubiquitin-conjugating enzyme]-L-cysteine + [acceptor protein]-L-lysine = [E2 ubiquitin-conjugating enzyme]-L-cysteine + N(6)-ubiquitinyl-[acceptor protein]-L-lysine.. It participates in protein modification; protein ubiquitination. Its function is as follows. E3 ubiquitin-protein ligase which may be involved in endosomal trafficking. E3 ubiquitin ligases accept ubiquitin from an E2 ubiquitin-conjugating enzyme in the form of a thioester and then directly transfer the ubiquitin to targeted substrates. This Xenopus tropicalis (Western clawed frog) protein is E3 ubiquitin-protein ligase MARCHF3 (marchf3).